The chain runs to 2832 residues: Cyclic beta-(1,2)-glucan synthase NdvB (2832 aa).

The next 7 membrane-spanning stretches (helical) occupy residues 411–431, 444–464, 810–830, 831–851, 880–900, 938–958, and 959–979; these read FAIA…VYAF, IMLL…FNTV, LIPV…EPTP, ALIW…LSLI, QVAL…DAIV, WTAP…DTGL, and PFIG…AWFV. A Glycoamylase-like domain is found at 1299 to 1506; it reads LASEARLTSL…NGQLREWFHA (208 aa).

This sequence belongs to the NdvB family.

It is found in the cell inner membrane. The catalysed reaction is [(1-&gt;2)-beta-D-glucosyl](n) + UDP-alpha-D-glucose = [(1-&gt;2)-beta-D-glucosyl](n+1) + UDP + H(+). Functionally, involved in the biosynthesis of cyclic beta-(1,2)-glucan. It seems that NdvB is involved in three enzymatic activities. First, it may catalyze the transfer of the first glucose from UDP-Glc to an unknown amino acid. In the second enzymatic activity (UDP-Glc:beta-(1,2) oligosaccharide glucosyltransferase), it may be responsible for chain elongation. Finally, in the third activity, it may catalyze glucan cyclization and release from the protein. NdvB is also involved in nodule invasion and in bacteroid development. The sequence is that of Cyclic beta-(1,2)-glucan synthase NdvB from Rhizobium meliloti (strain 1021) (Ensifer meliloti).